The sequence spans 893 residues: Serine/threonine-protein kinase PLK4 (893 aa).

The Protein kinase domain maps to 12–265 (FRVGNLLGKG…LSSVLDHPFM (254 aa)). ATP contacts are provided by residues 18-26 (LGKGSFAGV) and lysine 41. N6-acetyllysine occurs at positions 45 and 46. Aspartate 136 serves as the catalytic Proton acceptor. Positions 349 to 358 (NQEQETSNSG) are enriched in polar residues. Residues 349–393 (NQEQETSNSGRGRVIQEAEERPHSRYLRRAHSSDRSETSHGQSRV) are disordered. The segment covering 362 to 371 (VIQEAEERPH) has biased composition (basic and acidic residues). Serine 403 and serine 588 each carry phosphoserine. The region spanning 509-622 (TLRSITSPLT…SRFVQLVRSK (114 aa)) is the Cryptic POLO box 1 (CPB1) domain. One can recognise a Cryptic POLO box 2 (CPB2) domain in the interval 623 to 736 (SPKITYFTRY…GRRPSSTSSP (114 aa)). The interval 730–749 (PSSTSSPKALTPPPPVDPNY) is disordered. The region spanning 809–887 (QLLKSVFVKN…LSSILLMFSN (79 aa)) is the POLO box domain.

The protein belongs to the protein kinase superfamily. Ser/Thr protein kinase family. CDC5/Polo subfamily. In terms of assembly, homodimer. Interacts with CEP152 (via N-terminus). Interacts with CEP78; this interaction may be important for proper PLK4 localization to the centriole and PLK4-induced overduplication of centrioles. Interacts with CEP131. Interacts simultaneously with TENT5C and CEP192. Interacts with TENT5C; this interaction leads to the TENT5C recruitment in the centrosome. Interacts with CEP85; this interaction may be important in cell migration and centriole assembly. In terms of processing, ubiquitinated; leading to its degradation by the proteasome. Post-translationally, tyrosine-phosphorylated by TEC. Acetylation by KAT2A and KAT2B impairs kinase activity by shifting the kinase to an inactive conformation.

It localises to the cytoplasm. The protein resides in the cytoskeleton. The protein localises to the microtubule organizing center. It is found in the centrosome. Its subcellular location is the centriole. It localises to the nucleus. The protein resides in the nucleolus. The protein localises to the cleavage furrow. It carries out the reaction L-seryl-[protein] + ATP = O-phospho-L-seryl-[protein] + ADP + H(+). The catalysed reaction is L-threonyl-[protein] + ATP = O-phospho-L-threonyl-[protein] + ADP + H(+). Serine/threonine-protein kinase that plays a central role in centriole duplication. Able to trigger procentriole formation on the surface of the parental centriole cylinder, leading to the recruitment of centriole biogenesis proteins such as SASS6, CPAP, CCP110, CEP135 and gamma-tubulin. When overexpressed, it is able to induce centrosome amplification through the simultaneous generation of multiple procentrioles adjoining each parental centriole during S phase. Phosphorylates 'Ser-151' of FBXW5 during the G1/S transition, leading to inhibit FBXW5 ability to ubiquitinate SASS6. Its central role in centriole replication suggests a possible role in tumorigenesis, centrosome aberrations being frequently observed in tumors. Also involved in deuterosome-mediated centriole amplification in multiciliated that can generate more than 100 centrioles. Also involved in trophoblast differentiation by phosphorylating HAND1, leading to disrupt the interaction between HAND1 and MDFIC and activate HAND1. Phosphorylates CDC25C and CHEK2. Required for the recruitment of STIL to the centriole and for STIL-mediated centriole amplification. Phosphorylates CEP131 and PCM1 which is essential for proper organization and integrity of centriolar satellites. This chain is Serine/threonine-protein kinase PLK4, found in Bos taurus (Bovine).